We begin with the raw amino-acid sequence, 100 residues long: Putative pterin-4-alpha-carbinolamine dehydratase (100 aa).

Belongs to the pterin-4-alpha-carbinolamine dehydratase family.

The enzyme catalyses (4aS,6R)-4a-hydroxy-L-erythro-5,6,7,8-tetrahydrobiopterin = (6R)-L-erythro-6,7-dihydrobiopterin + H2O. The polypeptide is Putative pterin-4-alpha-carbinolamine dehydratase (Afipia carboxidovorans (strain ATCC 49405 / DSM 1227 / KCTC 32145 / OM5) (Oligotropha carboxidovorans)).